Consider the following 246-residue polypeptide: tRNA (guanine-N(1)-)-methyltransferase (246 aa).

Residues Gly113 and 132–137 (LGDYVL) contribute to the S-adenosyl-L-methionine site.

It belongs to the RNA methyltransferase TrmD family. Homodimer.

Its subcellular location is the cytoplasm. The catalysed reaction is guanosine(37) in tRNA + S-adenosyl-L-methionine = N(1)-methylguanosine(37) in tRNA + S-adenosyl-L-homocysteine + H(+). Functionally, specifically methylates guanosine-37 in various tRNAs. This Lactiplantibacillus plantarum (strain ATCC BAA-793 / NCIMB 8826 / WCFS1) (Lactobacillus plantarum) protein is tRNA (guanine-N(1)-)-methyltransferase.